The following is a 448-amino-acid chain: Asparagine--tRNA ligase (448 aa).

It belongs to the class-II aminoacyl-tRNA synthetase family. Homodimer.

Its subcellular location is the cytoplasm. The enzyme catalyses tRNA(Asn) + L-asparagine + ATP = L-asparaginyl-tRNA(Asn) + AMP + diphosphate + H(+). The chain is Asparagine--tRNA ligase from Streptococcus thermophilus (strain ATCC BAA-250 / LMG 18311).